The primary structure comprises 189 residues: Peptidyl-tRNA hydrolase (189 aa).

Tyrosine 16 contributes to the tRNA binding site. Histidine 21 (proton acceptor) is an active-site residue. The tRNA site is built by phenylalanine 67, asparagine 69, and asparagine 115.

The protein belongs to the PTH family. In terms of assembly, monomer.

The protein resides in the cytoplasm. It catalyses the reaction an N-acyl-L-alpha-aminoacyl-tRNA + H2O = an N-acyl-L-amino acid + a tRNA + H(+). Hydrolyzes ribosome-free peptidyl-tRNAs (with 1 or more amino acids incorporated), which drop off the ribosome during protein synthesis, or as a result of ribosome stalling. Its function is as follows. Catalyzes the release of premature peptidyl moieties from peptidyl-tRNA molecules trapped in stalled 50S ribosomal subunits, and thus maintains levels of free tRNAs and 50S ribosomes. This chain is Peptidyl-tRNA hydrolase, found in Legionella pneumophila (strain Corby).